The primary structure comprises 540 residues: Solute carrier family 22 member 7 (540 aa).

The next 12 helical transmembrane spans lie at 21-41 (LVLL…PIFM), 144-164 (VTST…GYLS), 172-192 (LLLV…ASVN), 202-222 (LTGS…LEWL), 232-252 (VIST…GYLI), 257-277 (WLLL…WWVP), 344-364 (VSLC…GLTL), 378-398 (LLFG…VRLV), 402-422 (LTEA…LLVS), 429-449 (ITAL…TAYL), 462-484 (TGMG…VVLL), and 488-510 (WLLL…VLLL).

The protein belongs to the major facilitator (TC 2.A.1) superfamily. Organic cation transporter (TC 2.A.1.19) family. Abundant expression in male and female kidney. In kidney, expressed at the brush border of the proximal tubule S3 segment (S3) in the outer stripe and medullary rays. In kidney, expression is higher in female than male. Also expressed in female liver.

It is found in the basolateral cell membrane. The protein localises to the apical cell membrane. Its subcellular location is the cell membrane. The enzyme catalyses orotate(out) + L-glutamate(in) = orotate(in) + L-glutamate(out). It catalyses the reaction 3',5'-cyclic GMP(in) = 3',5'-cyclic GMP(out). It carries out the reaction GMP(in) = GMP(out). The catalysed reaction is 2'-deoxyguanosine(in) = 2'-deoxyguanosine(out). The enzyme catalyses GDP(in) = GDP(out). It catalyses the reaction guanosine(in) = guanosine(out). It carries out the reaction GTP(in) = GTP(out). The catalysed reaction is 3',5'-cyclic AMP(in) = 3',5'-cyclic AMP(out). The enzyme catalyses creatinine(in) = creatinine(out). It catalyses the reaction prostaglandin E2(out) = prostaglandin E2(in). It carries out the reaction 2-oxoglutarate(in) = 2-oxoglutarate(out). The catalysed reaction is glutarate(in) = glutarate(out). The enzyme catalyses urate(out) = urate(in). It catalyses the reaction estrone 3-sulfate(out) = estrone 3-sulfate(in). In terms of biological role, functions as a Na(+)-independent bidirectional multispecific transporter. Contributes to the renal and hepatic elimination of endogenous organic compounds from the systemic circulation into the urine and bile, respectively. Capable of transporting a wide range of purine and pyrimidine nucleobases, nucleosides, and nucleotides with cGMP, 2'deoxyguanosine and GMP being the preferred substrates. Functions as a pH- and chloride-independent cGMP bidirectional facilitative transporter that can regulate both intracellular and extracellular levels of cGMP and may be involved in cGMP signaling pathways. Mediates orotate/glutamate bidirectional exchange and most likely display a physiological role in hepatic release of glutamate into the blood. Involved in renal secretion and possible reabsorption of creatinine. Able to uptake prostaglandin E2 (PGE2) and may contribute to PGE2 renal excretion. Also transports alpha-ketoglutarate and urate. Unlike human hortolog, able to transport glutarate. Apart from the orotate/glutamate exchange, the counterions for the uptake of other SLC22A7/OAT2 substrates remain to be identified. This chain is Solute carrier family 22 member 7, found in Mus musculus (Mouse).